A 330-amino-acid chain; its full sequence is Protein TIFY 11f (330 aa).

The Tify 1 domain occupies 61-97 (EAAAAAQLKIMYGGRMLVFDDFFPAGGAVVELVRAAA). Positions 124-142 (PVVRKVSLQRFVEKRRRMR) match the Jas motif. The short motif at 126–133 (VRKVSLQR) is the Nuclear localization signal element. The region spanning 228–264 (EAAAAAQLKIMYGGRMLVFDDFFPAGGAVVELVRAAA) is the Tify 2 domain. Positions 267 to 330 (GRDDDGARAR…SGRTDDAAFY (64 aa)) are disordered.

The protein belongs to the TIFY/JAZ family. Ubiquitinated. Targeted for degradation by the SCF(COI1) E3 ubiquitin ligase-proteasome pathway during jasmonate signaling.

The protein resides in the nucleus. Its function is as follows. Repressor of jasmonate responses. The polypeptide is Protein TIFY 11f (Oryza sativa subsp. japonica (Rice)).